We begin with the raw amino-acid sequence, 562 residues long: Arginine--tRNA ligase (562 aa).

Positions 129–139 (ANPTGPLHVGH) match the 'HIGH' region motif.

The protein belongs to the class-I aminoacyl-tRNA synthetase family. As to quaternary structure, monomer.

The protein localises to the cytoplasm. It catalyses the reaction tRNA(Arg) + L-arginine + ATP = L-arginyl-tRNA(Arg) + AMP + diphosphate. This chain is Arginine--tRNA ligase (argS), found in Xylella fastidiosa (strain 9a5c).